The primary structure comprises 425 residues: Formyl-CoA:oxalate CoA-transferase (425 aa).

CoA contacts are provided by residues 17–18 (QS), Arg38, 72–75 (LDTK), 96–98 (NFG), Arg104, and 136–139 (KVYE). Catalysis depends on Asp168, which acts as the Nucleophile. Substrate is bound at residue 247–249 (GGQ).

It belongs to the CoA-transferase III family. Frc subfamily. In terms of assembly, homodimer.

It carries out the reaction formyl-CoA + oxalate = oxalyl-CoA + formate. The protein operates within metabolic intermediate degradation; oxalate degradation; CO(2) and formate from oxalate: step 1/2. Involved in the catabolism of oxalate and in the adapatation to low pH via the induction of the oxalate-dependent acid tolerance response (ATR). Catalyzes the transfer of the CoA moiety from formyl-CoA to oxalate. In Rhodopseudomonas palustris (strain ATCC BAA-98 / CGA009), this protein is Formyl-CoA:oxalate CoA-transferase.